The chain runs to 456 residues: MDKRFAVVLAAGQGTRMKSKLYKVLHPVCGKPMVEHVVDEALKLSLSKLVTIVGHGAEEVKKQLGDKSEYRVQAKQLGTAHAVKQAQPFLADEKGVTIVICGDTPLLTAETMEQMLKEHTQREAKRTILTAVAEDPTGYGRIIRSENGAVQKIVEHKDASEEERLVTEINTGTYCFDNEALFRAIDQVSNDNAQGEYYLPDVIEILKNEGETVAAYQTGNFQETLGVNDRVALSQAEQFMKERINKRHMQNGVTLIDPMNTYISPDAVIGSDTVIYPGTVIKGEVQIGEDTIIGPHTEIMNSAIGSRTVIKQSVVNHSKVGNDVNIGPFAHIRPDSVIGNEVKIGNFVEIKKTQFGDRSKASHLSYVGDAEVGTDVNLGCGSITVNYDGKNKYLTKIEDGAFIGCNSNLVAPVTVGEGAYVAAGSTVTEDVPGKALAIARARQVNKDDYVKNIHKK.

The tract at residues Met-1–Arg-230 is pyrophosphorylase. UDP-N-acetyl-alpha-D-glucosamine-binding positions include Leu-9–Gly-12, Lys-23, Gln-73, and Gly-78–Thr-79. Residue Asp-103 participates in Mg(2+) binding. The UDP-N-acetyl-alpha-D-glucosamine site is built by Gly-140, Glu-155, Asn-170, and Asn-228. Residue Asn-228 coordinates Mg(2+). A linker region spans residues Val-231–Asn-251. Residues Gly-252–Lys-456 form an N-acetyltransferase region. UDP-N-acetyl-alpha-D-glucosamine is bound by residues Arg-333 and Lys-351. Residue His-363 is the Proton acceptor of the active site. Positions 366 and 377 each coordinate UDP-N-acetyl-alpha-D-glucosamine. Residues Asn-386 to Tyr-387, Ala-423, and Arg-440 each bind acetyl-CoA.

The protein in the N-terminal section; belongs to the N-acetylglucosamine-1-phosphate uridyltransferase family. In the C-terminal section; belongs to the transferase hexapeptide repeat family. In terms of assembly, homotrimer. Requires Mg(2+) as cofactor.

The protein resides in the cytoplasm. The enzyme catalyses alpha-D-glucosamine 1-phosphate + acetyl-CoA = N-acetyl-alpha-D-glucosamine 1-phosphate + CoA + H(+). It catalyses the reaction N-acetyl-alpha-D-glucosamine 1-phosphate + UTP + H(+) = UDP-N-acetyl-alpha-D-glucosamine + diphosphate. It participates in nucleotide-sugar biosynthesis; UDP-N-acetyl-alpha-D-glucosamine biosynthesis; N-acetyl-alpha-D-glucosamine 1-phosphate from alpha-D-glucosamine 6-phosphate (route II): step 2/2. It functions in the pathway nucleotide-sugar biosynthesis; UDP-N-acetyl-alpha-D-glucosamine biosynthesis; UDP-N-acetyl-alpha-D-glucosamine from N-acetyl-alpha-D-glucosamine 1-phosphate: step 1/1. The protein operates within bacterial outer membrane biogenesis; LPS lipid A biosynthesis. Functionally, catalyzes the last two sequential reactions in the de novo biosynthetic pathway for UDP-N-acetylglucosamine (UDP-GlcNAc). The C-terminal domain catalyzes the transfer of acetyl group from acetyl coenzyme A to glucosamine-1-phosphate (GlcN-1-P) to produce N-acetylglucosamine-1-phosphate (GlcNAc-1-P), which is converted into UDP-GlcNAc by the transfer of uridine 5-monophosphate (from uridine 5-triphosphate), a reaction catalyzed by the N-terminal domain. The chain is Bifunctional protein GlmU from Bacillus subtilis (strain 168).